A 444-amino-acid chain; its full sequence is Glutamyl-tRNA reductase (444 aa).

Substrate contacts are provided by residues 49-52 (TCNR), Ser109, 114-116 (ETQ), and Gln120. Residue Cys50 is the Nucleophile of the active site. 189–194 (GAGKMG) serves as a coordination point for NADP(+).

It belongs to the glutamyl-tRNA reductase family. In terms of assembly, homodimer.

It carries out the reaction (S)-4-amino-5-oxopentanoate + tRNA(Glu) + NADP(+) = L-glutamyl-tRNA(Glu) + NADPH + H(+). It participates in porphyrin-containing compound metabolism; protoporphyrin-IX biosynthesis; 5-aminolevulinate from L-glutamyl-tRNA(Glu): step 1/2. Catalyzes the NADPH-dependent reduction of glutamyl-tRNA(Glu) to glutamate 1-semialdehyde (GSA). This Bacillus cereus (strain ATCC 14579 / DSM 31 / CCUG 7414 / JCM 2152 / NBRC 15305 / NCIMB 9373 / NCTC 2599 / NRRL B-3711) protein is Glutamyl-tRNA reductase.